Consider the following 400-residue polypeptide: Elongation factor Tu 1 (400 aa).

Residues 10–209 form the tr-type G domain; the sequence is KPHVNIGTIG…AVDEYIPTPQ (200 aa). The interval 19–26 is G1; the sequence is GHVDHGKT. 19 to 26 provides a ligand contact to GTP; the sequence is GHVDHGKT. T26 provides a ligand contact to Mg(2+). Residues 60-64 are G2; sequence GITIN. The interval 81–84 is G3; the sequence is DCPG. Residues 81–85 and 136–139 each bind GTP; these read DCPGH and NKAD. The G4 stretch occupies residues 136-139; that stretch reads NKAD. The G5 stretch occupies residues 174–176; the sequence is SAL.

The protein belongs to the TRAFAC class translation factor GTPase superfamily. Classic translation factor GTPase family. EF-Tu/EF-1A subfamily. Monomer.

The protein resides in the cytoplasm. It catalyses the reaction GTP + H2O = GDP + phosphate + H(+). Its function is as follows. GTP hydrolase that promotes the GTP-dependent binding of aminoacyl-tRNA to the A-site of ribosomes during protein biosynthesis. This is Elongation factor Tu 1 from Pelotomaculum thermopropionicum (strain DSM 13744 / JCM 10971 / SI).